Consider the following 413-residue polypeptide: Peptide chain release factor 1, mitochondrial (413 aa).

The N-terminal 40 residues, 1-40, are a transit peptide targeting the mitochondrion; it reads MRVLIRPNFLSNLIRYCSRGTHSHDRSLRSVLSSNMIRLY. Q287 bears the N5-methylglutamine mark.

The protein belongs to the prokaryotic/mitochondrial release factor family. Post-translationally, methylation increases the termination efficiency of RF1. As to expression, mostly expressed in seedlings, stems and adult plants, and, to a lower extent, in siliques. Barely detected in etiolated seedlings and roots.

It localises to the mitochondrion. Functionally, peptide chain release factor 1 directs the termination of translation in response to the peptide chain termination codons UAG and UAA in mitochondria. In Arabidopsis thaliana (Mouse-ear cress), this protein is Peptide chain release factor 1, mitochondrial.